A 1014-amino-acid chain; its full sequence is Protein argonaute 2 (1014 aa).

A compositionally biased stretch (basic and acidic residues) spans 1–15 (MERGGYRGGRGDGRG). The disordered stretch occupies residues 1–137 (MERGGYRGGR…PSTSTTVVSE (137 aa)). 2 stretches are compositionally biased toward gly residues: residues 18 to 29 (GRGYGGGGGGGE) and 49 to 58 (RGGGNRGQGR). Over residues 83-104 (QFQQPRPQVAPQPSQAPASYAG) the composition is skewed to low complexity. The segment covering 105 to 114 (SVGGVAGRGA) has biased composition (gly residues). Residues 121–137 (VPSDSASPSTSTTVVSE) are compositionally biased toward low complexity. Residues 369 to 482 (SVIEYLKLYF…VPMEFCDLVE (114 aa)) form the PAZ domain. The Piwi domain occupies 666-965 (LVLCAMSRKD…VAFRGRMYHE (300 aa)). Interaction with guide RNA stretches follow at residues 857-858 (KR), 900-908 (HHGGIGTSK), and 937-959 (FTRCTKPVSLVPPVYYADMVAFR).

The protein belongs to the argonaute family. Ago subfamily. In terms of assembly, interacts with NERD.

Involved in RNA-mediated post-transcriptional gene silencing (PTGS). Main component of the RNA-induced silencing complex (RISC) that binds to a short guide RNA such as microRNA (miRNA) or small interfering RNA (siRNA). RISC uses the mature miRNA or siRNA as a guide for slicer-directed cleavage of homologous mRNAs to repress gene expression. Associates mainly with siRNAs of 21 nucleotide in length and preferentially recruits small RNAs with a 5' terminal adenosine. Probably involved in antiviral RNA silencing. Associates with siRNA derived from cucumber mosaic virus (CMV). Targeted by turnip yellows virus (TuYV) protein P0 (via F-box-like domain) for probable proteasome degradation and thereby inactivating AGO2 function in RNA silencing. Required to direct NERD-dependent DNA methylation and silencing. This Arabidopsis thaliana (Mouse-ear cress) protein is Protein argonaute 2 (AGO2).